We begin with the raw amino-acid sequence, 768 residues long: Ral guanine nucleotide dissociation stimulator-like 1 (768 aa).

An N-terminal Ras-GEF domain is found at 65-196 (KIRTIKAGTL…RAQNLLEQFQ (132 aa)). The Ras-GEF domain maps to 232–501 (SEDLVAEQLT…YALSCEIEAA (270 aa)). Ser-520 carries the phosphoserine modification. The interval 528-623 (MITSPTPTKE…PPSCNNNPKI (96 aa)) is disordered. Composition is skewed to low complexity over residues 541 to 561 (STASGSSGESMDSVSVSSCES), 586 to 596 (ESSSSCSSIHS), and 605 to 621 (SSLINPLSSPPSCNNNP). The region spanning 648–735 (DTCIIRISVE…FDFILRKKNS (88 aa)) is the Ras-associating domain.

Interacts with Ras. Expressed in a wide variety of tissues with strong expression being seen in the heart, brain, kidney, spleen and testis.

Its function is as follows. Probable guanine nucleotide exchange factor. This chain is Ral guanine nucleotide dissociation stimulator-like 1 (RGL1), found in Homo sapiens (Human).